The sequence spans 341 residues: Mitochondrial glutathione transporter SLC25A40 (341 aa).

Solcar repeat units follow at residues 14–132 (ITPS…LRDI), 140–224 (RAEI…VKQS), and 234–328 (PTFA…GKSF). Helical transmembrane passes span 20–40 (MIAS…LDVV), 104–124 (LWSG…IYFT), 143–163 (IASL…ISPL), 200–221 (WGPT…YELV), 236–256 (FAIS…VTLP), and 299–319 (GLFA…AIMI).

The protein belongs to the mitochondrial carrier (TC 2.A.29) family.

It is found in the mitochondrion inner membrane. The catalysed reaction is glutathione(in) = glutathione(out). Functionally, probable mitochondrial transporter required for glutathione import into mitochondria. Glutathione, which plays key roles in oxidative metabolism, is produced exclusively in the cytosol and is imported in many organelles. Mitochondrial glutathione is required for the activity and stability of proteins containing iron-sulfur clusters. This is Mitochondrial glutathione transporter SLC25A40 from Xenopus tropicalis (Western clawed frog).